Consider the following 475-residue polypeptide: Ribulose bisphosphate carboxylase large chain (475 aa).

Residues 1 to 2 constitute a propeptide that is removed on maturation; the sequence is MS. Position 3 is an N-acetylproline (proline 3). At lysine 14 the chain carries N6,N6,N6-trimethyllysine. Residues asparagine 123 and threonine 173 each contribute to the substrate site. Lysine 175 serves as the catalytic Proton acceptor. A substrate-binding site is contributed by lysine 177. Lysine 201, aspartate 203, and glutamate 204 together coordinate Mg(2+). Lysine 201 bears the N6-carboxylysine mark. Histidine 294 serves as the catalytic Proton acceptor. Residues arginine 295, histidine 327, and serine 379 each contribute to the substrate site.

Belongs to the RuBisCO large chain family. Type I subfamily. In terms of assembly, heterohexadecamer of 8 large chains and 8 small chains; disulfide-linked. The disulfide link is formed within the large subunit homodimers. The cofactor is Mg(2+). In terms of processing, the disulfide bond which can form in the large chain dimeric partners within the hexadecamer appears to be associated with oxidative stress and protein turnover.

The protein resides in the plastid. Its subcellular location is the chloroplast. It catalyses the reaction 2 (2R)-3-phosphoglycerate + 2 H(+) = D-ribulose 1,5-bisphosphate + CO2 + H2O. The catalysed reaction is D-ribulose 1,5-bisphosphate + O2 = 2-phosphoglycolate + (2R)-3-phosphoglycerate + 2 H(+). In terms of biological role, ruBisCO catalyzes two reactions: the carboxylation of D-ribulose 1,5-bisphosphate, the primary event in carbon dioxide fixation, as well as the oxidative fragmentation of the pentose substrate in the photorespiration process. Both reactions occur simultaneously and in competition at the same active site. In Vitis vinifera (Grape), this protein is Ribulose bisphosphate carboxylase large chain.